The chain runs to 364 residues: ATP synthase gamma chain, chloroplastic (364 aa).

Residues 1-41 constitute a chloroplast transit peptide; sequence MACSLSFSSSVSTFHLPTTTQSTQAPPNNATTLPTTNPIQC. A disordered region spans residues 17–36; sequence PTTTQSTQAPPNNATTLPTT. The segment covering 25–36 has biased composition (low complexity); it reads APPNNATTLPTT. The active site involves Cys-130. The cysteines at positions 240 and 246 are disulfide-linked.

The protein belongs to the ATPase gamma chain family. In terms of assembly, F-type ATPases have 2 components, CF(1) - the catalytic core - and CF(0) - the membrane proton channel. CF(1) has five subunits: alpha(3), beta(3), gamma(1), delta(1), epsilon(1). CF(0) has four main subunits: a, b, b' and c. In terms of processing, disulfide bond; Cys-240 and Cys-246 are known to form a disulfide bridge in the dark which gives rise to an inactive enzyme. Activation can be brought about by a ferredoxin-dependent reduction of the disulfide bond in the light.

Its subcellular location is the plastid. It is found in the chloroplast thylakoid membrane. In terms of biological role, produces ATP from ADP in the presence of a proton gradient across the membrane. The gamma chain is believed to be important in regulating ATPase activity and the flow of protons through the CF(0) complex. The polypeptide is ATP synthase gamma chain, chloroplastic (ATPC) (Spinacia oleracea (Spinach)).